We begin with the raw amino-acid sequence, 30 residues long: Cyclotide vdif-A (30 aa).

The cyclopeptide (Gly-Asn) cross-link spans 1–30 (GIPCGESCVFIPCISSVVGCSCKSKVCYRN). 3 cysteine pairs are disulfide-bonded: Cys-4–Cys-20, Cys-8–Cys-22, and Cys-13–Cys-27.

The protein belongs to the cyclotide family. Bracelet subfamily. This is a cyclic peptide.

In terms of biological role, probably participates in a plant defense mechanism. This is Cyclotide vdif-A from Viola diffusa.